The primary structure comprises 84 residues: Cell division topological specificity factor (84 aa).

Belongs to the MinE family.

Prevents the cell division inhibition by proteins MinC and MinD at internal division sites while permitting inhibition at polar sites. This ensures cell division at the proper site by restricting the formation of a division septum at the midpoint of the long axis of the cell. In Ralstonia nicotianae (strain ATCC BAA-1114 / GMI1000) (Ralstonia solanacearum), this protein is Cell division topological specificity factor.